The primary structure comprises 190 residues: Apolipoprotein M (190 aa).

The first 17 residues, 1 to 17 (MFHQVWAALLYLYGLLF), serve as a signal peptide directing secretion. Intrachain disulfides connect C23–C169, C95–C185, and C130–C159. Positions 138 and 145 each coordinate tetradecanoate.

Belongs to the calycin superfamily. Lipocalin family. Highly divergent. As to quaternary structure, interacts with LRP2; LRP2 mediates APOM renal uptake and subsequent lysosomal degradation. In terms of tissue distribution, expressed by the liver; secreted in plasma.

It is found in the secreted. Functionally, probably involved in lipid transport. Can bind sphingosine-1-phosphate, myristic acid, palmitic acid and stearic acid, retinol, all-trans-retinoic acid and 9-cis-retinoic acid. The sequence is that of Apolipoprotein M (Apom) from Rattus norvegicus (Rat).